A 69-amino-acid polypeptide reads, in one-letter code: DNA-directed RNA polymerase subunit epsilon (69 aa).

Belongs to the RNA polymerase subunit epsilon family. As to quaternary structure, RNAP is composed of a core of 2 alpha, a beta and a beta' subunit. The core is associated with a delta subunit, and at least one of epsilon or omega. When a sigma factor is associated with the core the holoenzyme is formed, which can initiate transcription.

The enzyme catalyses RNA(n) + a ribonucleoside 5'-triphosphate = RNA(n+1) + diphosphate. In terms of biological role, a non-essential component of RNA polymerase (RNAP). This chain is DNA-directed RNA polymerase subunit epsilon, found in Bacillus pumilus (strain SAFR-032).